Reading from the N-terminus, the 230-residue chain is Sugar fermentation stimulation protein homolog (230 aa).

The protein belongs to the SfsA family.

The polypeptide is Sugar fermentation stimulation protein homolog (Clostridium botulinum (strain ATCC 19397 / Type A)).